The primary structure comprises 559 residues: Endoglin (559 aa).

The first 20 residues, 1-20 (MKSICCVLVLCLLLCRRSTA), serve as a signal peptide directing secretion. Over 21-473 (SESICELKDV…SCFEFGLSAV (453 aa)) the chain is Extracellular. Cystine bridges form between Cys25-Cys201 and Cys47-Cys174. Asn55, Asn79, Asn109, Asn133, Asn170, Asn302, and Asn352 each carry an N-linked (GlcNAc...) asparagine glycan. Cys381 and Cys427 are disulfide-bonded. The chain crosses the membrane as a helical span at residues 474-494 (LGIAFGGFLIGVLLTGALWFI). Over 495–559 (KIRTGHPVAL…TQSTPTSSMA (65 aa)) the chain is Cytoplasmic. The interval 528 to 559 (RQPVPTHPSPSENSSANASIGSTQSTPTSSMA) is disordered. The span at 536–546 (SPSENSSANAS) shows a compositional bias: low complexity. The segment covering 547-559 (IGSTQSTPTSSMA) has biased composition (polar residues).

Homodimer; disulfide-linked.

It is found in the cell membrane. Functionally, vascular endothelium glycoprotein that plays an important role in the regulation of angiogenesis. Required for normal structure and integrity of adult vasculature. Important for endothelial cell shape changes in response to blood flow, which drive vascular remodeling and establishment of normal vascular morphology during angiogenesis. This Danio rerio (Zebrafish) protein is Endoglin.